A 104-amino-acid chain; its full sequence is Protein translation factor SUI1 homolog (104 aa).

This sequence belongs to the SUI1 family.

The polypeptide is Protein translation factor SUI1 homolog (Ignicoccus hospitalis (strain KIN4/I / DSM 18386 / JCM 14125)).